We begin with the raw amino-acid sequence, 148 residues long: UPF0178 protein CA_C2825 (148 aa).

The protein belongs to the UPF0178 family.

The chain is UPF0178 protein CA_C2825 from Clostridium acetobutylicum (strain ATCC 824 / DSM 792 / JCM 1419 / IAM 19013 / LMG 5710 / NBRC 13948 / NRRL B-527 / VKM B-1787 / 2291 / W).